Reading from the N-terminus, the 366-residue chain is GTP cyclohydrolase 1 type 2 homolog (366 aa).

Positions 64, 65, 102, 326, and 329 each coordinate Zn(2+).

This sequence belongs to the GTP cyclohydrolase I type 2/NIF3 family. As to quaternary structure, toroid-shaped homohexamer that has a central cavity of about 38 Angstroms diameter.

In Staphylococcus aureus (strain Mu50 / ATCC 700699), this protein is GTP cyclohydrolase 1 type 2 homolog.